A 37-amino-acid polypeptide reads, in one-letter code: Omega-conotoxin-like S6.7 (37 aa).

Residues 1-4 (KSTS) constitute a propeptide that is removed on maturation. 3 disulfide bridges follow: cysteine 5–cysteine 20, cysteine 12–cysteine 23, and cysteine 19–cysteine 32.

Belongs to the conotoxin O1 superfamily. Expressed by the venom duct.

It is found in the secreted. Its function is as follows. Omega-conotoxins act at presynaptic membranes, they bind and block voltage-gated calcium channels (Cav). This toxin blocks N-, P- and Q-type calcium channels. The sequence is that of Omega-conotoxin-like S6.7 from Conus striatus (Striated cone).